A 731-amino-acid polypeptide reads, in one-letter code: Anaphase-promoting complex subunit 2 (731 aa).

Belongs to the cullin family. The APC/C is probably composed of at least 12 subunits: apc-2, apc-10, apc-11, cdc-26, emb-1, emb-27, emb-30, mat-1, mat-2, mat-3, such-1 and gfi-3.

It participates in protein modification; protein ubiquitination. In terms of biological role, probable component of the anaphase promoting complex/cyclosome (APC/C), a cell cycle-regulated ubiquitin ligase that controls progression through mitosis and the G1 phase of the cell cycle. The APC/C complex acts by mediating ubiquitination and subsequent degradation of target proteins. Developmental role in early embryogenesis and the metaphase to anaphase transition in meiosis and mitosis. This chain is Anaphase-promoting complex subunit 2, found in Caenorhabditis elegans.